The following is a 445-amino-acid chain: MSERKFFGTDGIRGKVGSGQMTPELALKLGWAAGRVLSRSGTKKVIIGKDTRISGYMFESALEAGLSAAGLNVMLMGPMPTPAVAYLTRTFRAEAGVVISASHNPYYDNGIKFFSTDGSKLDDNLELEIEAELEKPLECVESHLLGKVSRIEDARGRYIEYCKGNFPADQTLTGLKIVVDCAHGATYHIAPAVFRELGAEVIAIGDKPNGVNINDKVGATSMAKICETVLTEGADLGIALDGDGDRIMMVNSRGEVIDGDQILYILACDAKARGVLRGGVVGTLMSNLGLDLALQALDIPFARSKVGDRYVMELLKELDWRIGGENSGHILNLDHGTTGDGIVAGILVLAAMRRQNATLEQLTAPMEMLPQVLVNVRFEGEHDPLSSDKVKAAQAQVESELGARGRVLLRKSGTEPLIRVMVEGDDHNTVLAHANLIADAVKSAS.

S102 functions as the Phosphoserine intermediate in the catalytic mechanism. Mg(2+) contacts are provided by S102, D241, D243, and D245. S102 is modified (phosphoserine).

The protein belongs to the phosphohexose mutase family. Requires Mg(2+) as cofactor. Activated by phosphorylation.

It carries out the reaction alpha-D-glucosamine 1-phosphate = D-glucosamine 6-phosphate. Its function is as follows. Catalyzes the conversion of glucosamine-6-phosphate to glucosamine-1-phosphate. This chain is Phosphoglucosamine mutase, found in Shewanella sp. (strain ANA-3).